Consider the following 235-residue polypeptide: Glutathione S-transferase L3 (235 aa).

The 82-residue stretch at 27-108 (GTTRLYTSYV…YLDNTFEGPS (82 aa)) folds into the GST N-terminal domain. Glutathione contacts are provided by residues 37–38 (CP), 65–66 (NR), 79–80 (KV), and 92–93 (ES). The 145-residue stretch at 86 to 230 (NGKIIGESLD…MDPKEIVEVF (145 aa)) folds into the GST C-terminal domain.

Belongs to the GST superfamily. Lambda family.

Its subcellular location is the cytoplasm. It localises to the cytosol. The enzyme catalyses RX + glutathione = an S-substituted glutathione + a halide anion + H(+). Its function is as follows. Catalyzes the glutathione-dependent reduction of S-glutathionylquercetin to quercetin. The chain is Glutathione S-transferase L3 (GSTL3) from Arabidopsis thaliana (Mouse-ear cress).